We begin with the raw amino-acid sequence, 601 residues long: Elongation factor 4 (601 aa).

A tr-type G domain is found at 5–187 (EHIRNFSIIA…AIVERLPAPE (183 aa)). Residues 17–22 (DHGKST) and 134–137 (NKID) each bind GTP.

Belongs to the TRAFAC class translation factor GTPase superfamily. Classic translation factor GTPase family. LepA subfamily.

It localises to the cell inner membrane. The enzyme catalyses GTP + H2O = GDP + phosphate + H(+). Its function is as follows. Required for accurate and efficient protein synthesis under certain stress conditions. May act as a fidelity factor of the translation reaction, by catalyzing a one-codon backward translocation of tRNAs on improperly translocated ribosomes. Back-translocation proceeds from a post-translocation (POST) complex to a pre-translocation (PRE) complex, thus giving elongation factor G a second chance to translocate the tRNAs correctly. Binds to ribosomes in a GTP-dependent manner. In Nitratidesulfovibrio vulgaris (strain ATCC 29579 / DSM 644 / CCUG 34227 / NCIMB 8303 / VKM B-1760 / Hildenborough) (Desulfovibrio vulgaris), this protein is Elongation factor 4.